A 105-amino-acid polypeptide reads, in one-letter code: Synaptic plasticity regulator PANTS (105 aa).

Belongs to the UPF0545 family. In terms of assembly, interacts with RTN4 isoform A/Nogo-A; the interaction results in enhanced RTN4-mediated inhibition of AMPA receptor clustering. Also interacts with NCAM1, RANBP2 and CCT8. Post-translationally, rapidly degraded by proteolysis following neuronal stimulation, resulting in increased AMPA receptor clustering.

It localises to the synapse. The protein localises to the synaptic cleft. Its function is as follows. Negatively regulates long-term potentiation and modulates adult synaptic plasticity. Stabilizes the interaction of RTN4 isoform A/Nogo-A with its receptors, inhibiting clustering of postsynaptic AMPA receptors at synaptic sites. Upon neuronal stimulation, degraded at synapses, reducing RTN4 signaling and allowing AMPA receptor clustering at individual synapses. The polypeptide is Synaptic plasticity regulator PANTS (C22orf39) (Homo sapiens (Human)).